The sequence spans 366 residues: Chorismate synthase (366 aa).

Arg-48 provides a ligand contact to NADP(+). FMN is bound by residues 125–127 (RSS), 238–239 (NA), Gly-278, 293–297 (KPTSS), and Arg-319.

The protein belongs to the chorismate synthase family. In terms of assembly, homotetramer. FMNH2 serves as cofactor.

The catalysed reaction is 5-O-(1-carboxyvinyl)-3-phosphoshikimate = chorismate + phosphate. It participates in metabolic intermediate biosynthesis; chorismate biosynthesis; chorismate from D-erythrose 4-phosphate and phosphoenolpyruvate: step 7/7. Its function is as follows. Catalyzes the anti-1,4-elimination of the C-3 phosphate and the C-6 proR hydrogen from 5-enolpyruvylshikimate-3-phosphate (EPSP) to yield chorismate, which is the branch point compound that serves as the starting substrate for the three terminal pathways of aromatic amino acid biosynthesis. This reaction introduces a second double bond into the aromatic ring system. In Alkalilimnicola ehrlichii (strain ATCC BAA-1101 / DSM 17681 / MLHE-1), this protein is Chorismate synthase.